The primary structure comprises 493 residues: Insulinoma-associated protein 2 (493 aa).

Basic residues predominate over residues 1–12 (MPRGFLVKRTKR). The segment at 1-20 (MPRGFLVKRTKRSGSSYRAR) is SNAG domain. Positions 1–77 (MPRGFLVKRT…PGPSPARPAG (77 aa)) are disordered. A C2H2-type 1; atypical zinc finger spans residues 203-223 (FICQLCKHQYADPFALAQHRC). Residues 231–253 (YRCPECDKVFSCPANLASHRRWH) form a C2H2-type 2 zinc finger. The segment at 248-310 (SHRRWHKPRP…SGDGQHRDSA (63 aa)) is disordered. Residues 267–276 (PHAPLTPPDP) show a composition bias toward pro residues. Residues 283–294 (ENGRVPRTDDQH) show a composition bias toward basic and acidic residues. 3 consecutive C2H2-type zinc fingers follow at residues 354-376 (FVCP…LGTH), 398-420 (FACP…RLWH), and 452-475 (FSCK…NKCH).

Expressed in spleen, stomach, liver, kidney and testis. In the pancreas, expressed in islet cells, including insulin-producing beta-cells, but not in acinar cells (at protein level). In the brain, expressed in the neuronal cells of the cerebral cortex, the Purkinje cells of the cerebellum and the hippocampal region including CA1 and CA3 (at protein level).

The protein localises to the cytoplasm. The protein resides in the nucleus. Its function is as follows. May function as a growth suppressor or tumor suppressor in liver cells and in certain neurons. The polypeptide is Insulinoma-associated protein 2 (Insm2) (Mus musculus (Mouse)).